Here is a 356-residue protein sequence, read N- to C-terminus: Glucose 1-dehydrogenase 2 (356 aa).

Aspartate 38 provides a ligand contact to Zn(2+). Serine 40 lines the substrate pocket. 2 residues coordinate Zn(2+): histidine 64 and glutamate 65. Residues glutamate 114 and glutamate 150 each coordinate substrate. A Zn(2+)-binding site is contributed by glutamate 150. Residues 181-184 (NGNL), 206-207 (RR), and 301-303 (VVN) each bind NADP(+). Asparagine 303 contacts substrate.

This sequence belongs to the zinc-containing alcohol dehydrogenase family. Glucose 1-dehydrogenase subfamily. Zn(2+) serves as cofactor.

It catalyses the reaction D-glucose + NAD(+) = D-glucono-1,5-lactone + NADH + H(+). The enzyme catalyses D-glucose + NADP(+) = D-glucono-1,5-lactone + NADPH + H(+). In terms of biological role, catalyzes the NAD(P)(+)-dependent oxidation of D-glucose to D-gluconate via gluconolactone. Can utilize both NAD(+) and NADP(+) as electron acceptor. Is involved in the degradation of glucose through a modified Entner-Doudoroff pathway. The polypeptide is Glucose 1-dehydrogenase 2 (Haloterrigena turkmenica (strain ATCC 51198 / DSM 5511 / JCM 9101 / NCIMB 13204 / VKM B-1734 / 4k) (Halococcus turkmenicus)).